A 264-amino-acid polypeptide reads, in one-letter code: MSVISMKQLLEAGVHFGHQTRRWNPKMKEYIFTERNGIYIIDLQKTVRMVEIAYNAVRQMAADGGKILFIGTKKQAQDAVREEAERCGMFYVNQRWLGGMLTNFETIKKRIARLNELEEIEGTEYWSKLTKKEQAQLLHEKEKLEKNLGGIKGMKSLPDMAFVIDPRRERIAVSELRKLGIPIVAIVDTNCDPDEIDYVIPGNDDAIRAVKLLTSKIADAVIEGRQGVDTSATVDEEEAEVAEETESMESAEDLDADLIEEEAE.

The interval 228–264 (VDTSATVDEEEAEVAEETESMESAEDLDADLIEEEAE) is disordered. Acidic residues predominate over residues 234 to 264 (VDEEEAEVAEETESMESAEDLDADLIEEEAE).

This sequence belongs to the universal ribosomal protein uS2 family.

The polypeptide is Small ribosomal subunit protein uS2 (Symbiobacterium thermophilum (strain DSM 24528 / JCM 14929 / IAM 14863 / T)).